Consider the following 191-residue polypeptide: Fe/S biogenesis protein NfuA (191 aa).

[4Fe-4S] cluster is bound by residues cysteine 149 and cysteine 152.

This sequence belongs to the NfuA family. In terms of assembly, homodimer. [4Fe-4S] cluster is required as a cofactor.

Involved in iron-sulfur cluster biogenesis. Binds a 4Fe-4S cluster, can transfer this cluster to apoproteins, and thereby intervenes in the maturation of Fe/S proteins. Could also act as a scaffold/chaperone for damaged Fe/S proteins. The sequence is that of Fe/S biogenesis protein NfuA from Salmonella typhi.